Here is a 620-residue protein sequence, read N- to C-terminus: Chaperone protein HscA homolog (620 aa).

This sequence belongs to the heat shock protein 70 family.

Functionally, chaperone involved in the maturation of iron-sulfur cluster-containing proteins. Has a low intrinsic ATPase activity which is markedly stimulated by HscB. The sequence is that of Chaperone protein HscA homolog from Acinetobacter baylyi (strain ATCC 33305 / BD413 / ADP1).